The primary structure comprises 1852 residues: Dihydropyridine-sensitive L-type skeletal muscle calcium channel subunit alpha-1 (1852 aa).

Topologically, residues Met1–Lys70 are cytoplasmic. The I repeat unit spans residues Asn57 to Phe354. The helical transmembrane segment at Pro71–Ala86 threads the bilayer. Topologically, residues Leu87 to Ser107 are extracellular. N-linked (GlcNAc...) asparagine glycans are attached at residues Asn99 and Asn102. The helical transmembrane segment at Leu108–Tyr127 threads the bilayer. The Cytoplasmic segment spans residues Gly128–Asn139. Residues Cys140–Thr155 form a helical membrane-spanning segment. At Leu156–Asp176 the chain is on the extracellular side. Residues Met177–Val195 form a helical membrane-spanning segment. Residues Pro196–His214 are Cytoplasmic-facing. The chain crosses the membrane as a helical span at residues Ile215 to Phe234. Residues Lys235–Trp326 lie on the Extracellular side of the membrane. N-linked (GlcNAc...) asparagine glycosylation is present at Asn274. Residues Pro327 to Ser351 traverse the membrane as a helical segment. Over Gly352–Lys447 the chain is Cytoplasmic. Residues Gln374–Glu391 are binding to the beta subunit. The stretch at Asn433–Leu679 is one II repeat. The chain crosses the membrane as a helical span at residues Phe448–Met466. Over Glu467–Thr481 the chain is Extracellular. Residue Asn470 is glycosylated (N-linked (GlcNAc...) asparagine). Residues Ala482–Phe501 form a helical membrane-spanning segment. Over Gly502 to Ser509 the chain is Cytoplasmic. A helical membrane pass occupies residues Ile510–Leu528. Topologically, residues Val529 to Gly538 are extracellular. The chain crosses the membrane as a helical span at residues Ile539–Trp557. At Thr558 to Ser576 the chain is on the cytoplasmic side. A helical membrane pass occupies residues Leu577 to Phe596. The Extracellular segment spans residues Gly597–Leu651. Residues Val652–Ala675 form a helical membrane-spanning segment. At Val676–Thr815 the chain is on the cytoplasmic side. The III repeat unit spans residues His802–Phe1084. A helical transmembrane segment spans residues Thr816–Ala834. Topologically, residues Glu835–Tyr850 are extracellular. Residues Ala851 to Tyr870 form a helical membrane-spanning segment. Over Gly871–Asn882 the chain is Cytoplasmic. The chain crosses the membrane as a helical span at residues Ser883–Met901. The Extracellular segment spans residues Glu902–Val908. Residues Val909–Ala927 form a helical membrane-spanning segment. The Cytoplasmic portion of the chain corresponds to Lys928–Asn946. The helical transmembrane segment at Ile947–Phe966 threads the bilayer. Over Lys967–Gly1056 the chain is Extracellular. The tract at residues Arg1004–Lys1093 is dihydropyridine binding. A helical transmembrane segment spans residues Ile1057–Ile1081. Topologically, residues Val1082 to Cys1134 are cytoplasmic. An IV repeat occupies Asn1121 to Val1405. A helical transmembrane segment spans residues Tyr1135–Ile1153. Topologically, residues Gln1154–Thr1168 are extracellular. The N-linked (GlcNAc...) asparagine glycan is linked to Asn1157. The helical transmembrane segment at Leu1169–Phe1188 threads the bilayer. Residues Lys1189–Asp1196 are Cytoplasmic-facing. The chain crosses the membrane as a helical span at residues Pro1197–Leu1215. The Extracellular portion of the chain corresponds to Ser1216–Ser1252. A helical membrane pass occupies residues Ile1253–Ser1271. Residues Glu1272–His1290 are Cytoplasmic-facing. Residues Val1291 to Phe1310 traverse the membrane as a helical segment. Residues Gly1311–Ile1377 lie on the Extracellular side of the membrane. Positions Leu1358–Lys1424 are dihydropyridine binding. The phenylalkylamine binding stretch occupies residues Glu1370–Ser1413. The helical transmembrane segment at Ala1378–Met1402 threads the bilayer. Residues Asp1403–Val1852 lie on the Cytoplasmic side of the membrane. In terms of domain architecture, EF-hand spans His1418–Pro1453. Ca(2+)-binding residues include Asp1431, Glu1433, Thr1435, Arg1437, and Asp1442. The tract at residues Asn1820 to Val1852 is disordered.

It belongs to the calcium channel alpha-1 subunit (TC 1.A.1.11) family. As to quaternary structure, multisubunit complex consisting of alpha-1, alpha-2, beta and delta subunits in a 1:1:1:1 ratio. The channel activity is directed by the pore-forming and voltage-sensitive alpha-1 subunit. In many cases, this subunit is sufficient to generate voltage-sensitive calcium channel activity. The auxiliary subunits beta and alpha-2/delta linked by a disulfide bridge regulate the channel activity. An additional gamma subunit is present only in skeletal muscle L-type channel. Post-translationally, may be non-phosphorylated. As to expression, skeletal muscle.

It is found in the membrane. Its function is as follows. Voltage-sensitive calcium channels (VSCC) mediate the entry of calcium ions into excitable cells and are also involved in a variety of calcium-dependent processes, including muscle contraction, gene expression, cell motility, cell division and cell death. The isoform alpha-1S gives rise to L-type calcium currents. Long-lasting (L-type) calcium channels belong to the 'high-voltage activated' (HVA) group. They are blocked by dihydropyridines (DHP), phenylalkylamines, and by benzothiazepines. Calcium channels containing the alpha-1S subunit play an important role in excitation-contraction coupling in skeletal muscle. This is Dihydropyridine-sensitive L-type skeletal muscle calcium channel subunit alpha-1 from Cyprinus carpio (Common carp).